The chain runs to 52 residues: Conotoxin Ac4.3a (52 aa).

Residues 1-11 (SDFRNAAVHER) constitute a propeptide that is removed on maturation. Q12 carries the post-translational modification Pyrrolidone carboxylic acid. 4-carboxyglutamate is present on E14. Residues T18 and T20 are each glycosylated (O-linked (HexNAc...) threonine). A 4-hydroxyproline mark is found at P28, P33, and P47. A Proline amide modification is found at P47. Residues 48–52 (GRRND) constitute a propeptide that is removed on maturation.

Belongs to the conotoxin A superfamily. Contains 3 disulfide bonds. As to expression, expressed by the venom duct.

It localises to the secreted. In terms of biological role, probable neurotoxin with ion channel inhibitor activity. The chain is Conotoxin Ac4.3a from Conus achatinus (Little frog cone).